The following is a 120-amino-acid chain: Ribosome-binding factor A (120 aa).

It belongs to the RbfA family. As to quaternary structure, monomer. Binds 30S ribosomal subunits, but not 50S ribosomal subunits or 70S ribosomes.

Its subcellular location is the cytoplasm. In terms of biological role, one of several proteins that assist in the late maturation steps of the functional core of the 30S ribosomal subunit. Associates with free 30S ribosomal subunits (but not with 30S subunits that are part of 70S ribosomes or polysomes). Required for efficient processing of 16S rRNA. May interact with the 5'-terminal helix region of 16S rRNA. The sequence is that of Ribosome-binding factor A from Fusobacterium nucleatum subsp. nucleatum (strain ATCC 25586 / DSM 15643 / BCRC 10681 / CIP 101130 / JCM 8532 / KCTC 2640 / LMG 13131 / VPI 4355).